A 456-amino-acid chain; its full sequence is Adenylosuccinate lyase (456 aa).

Residues 15 to 16, 90 to 92, and 122 to 123 contribute to the N(6)-(1,2-dicarboxyethyl)-AMP site; these read RY, NHD, and TS. Catalysis depends on H171, which acts as the Proton donor/acceptor. Residue Q247 participates in N(6)-(1,2-dicarboxyethyl)-AMP binding. S295 serves as the catalytic Proton donor/acceptor. N(6)-(1,2-dicarboxyethyl)-AMP contacts are provided by residues S296, 301–303, N309, R335, and 340–344; these read KVN and STVLR.

It belongs to the lyase 1 family. Adenylosuccinate lyase subfamily. In terms of assembly, homotetramer. Residues from neighboring subunits contribute catalytic and substrate-binding residues to each active site.

The catalysed reaction is N(6)-(1,2-dicarboxyethyl)-AMP = fumarate + AMP. It carries out the reaction (2S)-2-[5-amino-1-(5-phospho-beta-D-ribosyl)imidazole-4-carboxamido]succinate = 5-amino-1-(5-phospho-beta-D-ribosyl)imidazole-4-carboxamide + fumarate. Its pathway is purine metabolism; AMP biosynthesis via de novo pathway; AMP from IMP: step 2/2. It participates in purine metabolism; IMP biosynthesis via de novo pathway; 5-amino-1-(5-phospho-D-ribosyl)imidazole-4-carboxamide from 5-amino-1-(5-phospho-D-ribosyl)imidazole-4-carboxylate: step 2/2. In terms of biological role, catalyzes two reactions in de novo purine nucleotide biosynthesis. Catalyzes the breakdown of 5-aminoimidazole- (N-succinylocarboxamide) ribotide (SAICAR or 2-[5-amino-1-(5-phospho-beta-D-ribosyl)imidazole-4-carboxamido]succinate) to 5-aminoimidazole-4-carboxamide ribotide (AICAR or 5-amino-1-(5-phospho-beta-D-ribosyl)imidazole-4-carboxamide) and fumarate, and of adenylosuccinate (ADS or N(6)-(1,2-dicarboxyethyl)-AMP) to adenosine monophosphate (AMP) and fumarate. This is Adenylosuccinate lyase (purB) from Buchnera aphidicola subsp. Acyrthosiphon pisum (strain APS) (Acyrthosiphon pisum symbiotic bacterium).